The chain runs to 375 residues: Probable dipeptidase PepE (375 aa).

2 helical membrane-spanning segments follow: residues 15–35 (LALA…ITPG) and 55–75 (LVLP…LAAL). Mn(2+) contacts are provided by Asp-230, Asp-242, His-306, Glu-335, and Glu-349.

The protein belongs to the peptidase M24B family. The cofactor is Mn(2+).

It localises to the cell membrane. This is Probable dipeptidase PepE (pepE) from Mycobacterium bovis (strain ATCC BAA-935 / AF2122/97).